Reading from the N-terminus, the 134-residue chain is Homeobox protein ceh-5 (134 aa).

Residues 35-94 constitute a DNA-binding region (homeobox); sequence PKRPRTVFTDEQLEKLEESFNTSGYLSGSTRAKLAESLGLSDNQVKVWFQNRRTKQKKID.

The protein resides in the nucleus. This chain is Homeobox protein ceh-5 (ceh-5), found in Caenorhabditis elegans.